We begin with the raw amino-acid sequence, 143 residues long: MSNSTMEATQMKVKLAVDEMIDDLDKTYLRDMQKSMFQCSARCCDNKKTTRDAVENCVESCNDGMKKAQGYLEKELGGLQDQLSRCAMTCYDKLVQQFGPDVNKYSESQKLSFNEKLDSCVSVCADDHIKLIPAIKKRFAKNT.

Belongs to the FAM136 family.

Its subcellular location is the cytoplasm. Functionally, may play a role in locomotion and behavior. The sequence is that of FAM161 homolog famh-136 from Caenorhabditis elegans.